The chain runs to 923 residues: Periplasmic nitrate reductase (923 aa).

A signal peptide (tat-type signal) is located at residues 1-30 (MNRRDFIKNTAIASAASVAGLSVPSSMLGA). Residues 34–90 (WKWDKAVCRFCGTGCGIMIARKDGKIVATKGDPAAPVNRGLNCIKGYFNAKIMYGED) enclose the 4Fe-4S Mo/W bis-MGD-type domain. The [4Fe-4S] cluster site is built by Cys41, Cys44, Cys48, and Cys76. Mo-bis(molybdopterin guanine dinucleotide) is bound by residues Lys78, Gln146, Asn171, Cys175, 208 to 215 (WGANMAEM), Met416, Gln420, Asn526, 551 to 552 (SD), Lys574, Asp601, and 813 to 822 (TGRVLEHWHS). Residue Trp889 coordinates substrate. Residues Asn897 and Lys914 each coordinate Mo-bis(molybdopterin guanine dinucleotide).

This sequence belongs to the prokaryotic molybdopterin-containing oxidoreductase family. NasA/NapA/NarB subfamily. Component of the periplasmic nitrate reductase NapAB complex composed of NapA and NapB. Requires [4Fe-4S] cluster as cofactor. Mo-bis(molybdopterin guanine dinucleotide) is required as a cofactor. In terms of processing, predicted to be exported by the Tat system. The position of the signal peptide cleavage has not been experimentally proven.

It localises to the periplasm. The enzyme catalyses 2 Fe(II)-[cytochrome] + nitrate + 2 H(+) = 2 Fe(III)-[cytochrome] + nitrite + H2O. Catalytic subunit of the periplasmic nitrate reductase complex NapAB. Receives electrons from NapB and catalyzes the reduction of nitrate to nitrite. In Campylobacter jejuni subsp. jejuni serotype O:23/36 (strain 81-176), this protein is Periplasmic nitrate reductase.